Here is a 171-residue protein sequence, read N- to C-terminus: Putative F-box protein At1g32020 (171 aa).

The F-box domain maps to 3–49 (CDRISTLPDHLVAKIVSYLGIKDSIKTSVLSKRWEFVWLKVVGLDLK).

This is Putative F-box protein At1g32020 from Arabidopsis thaliana (Mouse-ear cress).